Reading from the N-terminus, the 184-residue chain is Adenine phosphoribosyltransferase (184 aa).

This sequence belongs to the purine/pyrimidine phosphoribosyltransferase family. Homodimer.

It localises to the cytoplasm. The catalysed reaction is AMP + diphosphate = 5-phospho-alpha-D-ribose 1-diphosphate + adenine. It participates in purine metabolism; AMP biosynthesis via salvage pathway; AMP from adenine: step 1/1. In terms of biological role, catalyzes a salvage reaction resulting in the formation of AMP, that is energically less costly than de novo synthesis. This is Adenine phosphoribosyltransferase from Parafrankia sp. (strain EAN1pec).